Consider the following 739-residue polypeptide: Phosphoribosylformylglycinamidine synthase subunit PurL (739 aa).

The active site involves H54. 2 residues coordinate ATP: Y57 and K96. Residue E98 coordinates Mg(2+). Substrate is bound by residues 99–102 (SHNH) and R121. H100 serves as the catalytic Proton acceptor. D122 provides a ligand contact to Mg(2+). Q245 is a substrate binding site. Residue D273 coordinates Mg(2+). Residue 317-319 (ESQ) participates in substrate binding. 2 residues coordinate ATP: D500 and G537. N538 contacts Mg(2+). S540 is a binding site for substrate.

This sequence belongs to the FGAMS family. Monomer. Part of the FGAM synthase complex composed of 1 PurL, 1 PurQ and 2 PurS subunits.

It is found in the cytoplasm. It catalyses the reaction N(2)-formyl-N(1)-(5-phospho-beta-D-ribosyl)glycinamide + L-glutamine + ATP + H2O = 2-formamido-N(1)-(5-O-phospho-beta-D-ribosyl)acetamidine + L-glutamate + ADP + phosphate + H(+). It functions in the pathway purine metabolism; IMP biosynthesis via de novo pathway; 5-amino-1-(5-phospho-D-ribosyl)imidazole from N(2)-formyl-N(1)-(5-phospho-D-ribosyl)glycinamide: step 1/2. Part of the phosphoribosylformylglycinamidine synthase complex involved in the purines biosynthetic pathway. Catalyzes the ATP-dependent conversion of formylglycinamide ribonucleotide (FGAR) and glutamine to yield formylglycinamidine ribonucleotide (FGAM) and glutamate. The FGAM synthase complex is composed of three subunits. PurQ produces an ammonia molecule by converting glutamine to glutamate. PurL transfers the ammonia molecule to FGAR to form FGAM in an ATP-dependent manner. PurS interacts with PurQ and PurL and is thought to assist in the transfer of the ammonia molecule from PurQ to PurL. This chain is Phosphoribosylformylglycinamidine synthase subunit PurL, found in Bacillus cereus (strain B4264).